The primary structure comprises 313 residues: Acetyl-coenzyme A carboxylase carboxyl transferase subunit alpha (313 aa).

In terms of domain architecture, CoA carboxyltransferase C-terminal spans 36–286 (RLDKEVKTIY…KEYFLDTLRT (251 aa)).

It belongs to the AccA family. As to quaternary structure, acetyl-CoA carboxylase is a heterohexamer composed of biotin carboxyl carrier protein (AccB), biotin carboxylase (AccC) and two subunits each of ACCase subunit alpha (AccA) and ACCase subunit beta (AccD).

It localises to the cytoplasm. The enzyme catalyses N(6)-carboxybiotinyl-L-lysyl-[protein] + acetyl-CoA = N(6)-biotinyl-L-lysyl-[protein] + malonyl-CoA. Its pathway is lipid metabolism; malonyl-CoA biosynthesis; malonyl-CoA from acetyl-CoA: step 1/1. In terms of biological role, component of the acetyl coenzyme A carboxylase (ACC) complex. First, biotin carboxylase catalyzes the carboxylation of biotin on its carrier protein (BCCP) and then the CO(2) group is transferred by the carboxyltransferase to acetyl-CoA to form malonyl-CoA. The polypeptide is Acetyl-coenzyme A carboxylase carboxyl transferase subunit alpha (Helicobacter acinonychis (strain Sheeba)).